Consider the following 641-residue polypeptide: Methionine--tRNA ligase (641 aa).

Positions 13-23 (YYPSAKLHIGN) match the 'HIGH' region motif. Zn(2+) is bound by residues cysteine 128, cysteine 131, cysteine 145, and cysteine 148. The 'KMSKS' region signature appears at 298–302 (KMSKS). Residue lysine 301 coordinates ATP. Residues 539–641 (DFDKIDLRVV…GELPTGSQVR (103 aa)) form the tRNA-binding domain.

The protein belongs to the class-I aminoacyl-tRNA synthetase family. MetG type 2A subfamily. As to quaternary structure, homodimer. Zn(2+) serves as cofactor.

Its subcellular location is the cytoplasm. It carries out the reaction tRNA(Met) + L-methionine + ATP = L-methionyl-tRNA(Met) + AMP + diphosphate. Functionally, is required not only for elongation of protein synthesis but also for the initiation of all mRNA translation through initiator tRNA(fMet) aminoacylation. This chain is Methionine--tRNA ligase, found in Clostridium tetani (strain Massachusetts / E88).